The following is an 86-amino-acid chain: Large ribosomal subunit protein bL27 (86 aa).

The interval 1 to 24 (MAHKKGTGSTRNGRDSNSKRLGVK) is disordered.

This sequence belongs to the bacterial ribosomal protein bL27 family.

This is Large ribosomal subunit protein bL27 from Prochlorococcus marinus (strain MIT 9312).